The following is a 742-amino-acid chain: Eukaryotic translation initiation factor 3 subunit B (742 aa).

Polar residues predominate over residues 1–10 (MAPSFDTLSE). Residues 1 to 20 (MAPSFDTLSEQDLHEEEEEE) form a disordered region. Positions 40–126 (TFVVIDGLPI…HTLAVNKLMD (87 aa)) constitute an RRM domain. 5 WD repeats span residues 193-230 (AHWT…KLKQ), 232-290 (PHPF…RSFV), 304-345 (QPKK…LLGK), 515-558 (IEKK…EKPE), and 573-611 (VEHY…HTFA).

The protein belongs to the eIF-3 subunit B family. In terms of assembly, component of the eukaryotic translation initiation factor 3 (eIF-3) complex.

It is found in the cytoplasm. RNA-binding component of the eukaryotic translation initiation factor 3 (eIF-3) complex, which is involved in protein synthesis of a specialized repertoire of mRNAs and, together with other initiation factors, stimulates binding of mRNA and methionyl-tRNAi to the 40S ribosome. The eIF-3 complex specifically targets and initiates translation of a subset of mRNAs involved in cell proliferation. The protein is Eukaryotic translation initiation factor 3 subunit B (prt1) of Aspergillus terreus (strain NIH 2624 / FGSC A1156).